The sequence spans 98 residues: MNPSAAVVLCLVLLSLSGTQGIPLARTVRCTCIDFHEQPLRPRAIGKLEIIPASLSCPHVEIIATMKKNNEKRCLNPESEAIKSLLKAVSQRRSKRAP.

The N-terminal stretch at 1–21 (MNPSAAVVLCLVLLSLSGTQG) is a signal peptide. Position 26 is a citrulline (R26). Intrachain disulfides connect C30–C57 and C32–C74.

It belongs to the intercrine alpha (chemokine CxC) family. As to quaternary structure, monomer, dimer, and tetramer. Interacts with CXCR3 (via N-terminus). In the central nervous system, CXCL10 is predominantly localized to activated neurons. Expressed in both microglia and astrocytes.

Its subcellular location is the secreted. Functionally, pro-inflammatory cytokine that is involved in a wide variety of processes such as chemotaxis, differentiation, and activation of peripheral immune cells, regulation of cell growth, apoptosis and modulation of angiostatic effects. Plays thereby an important role during viral infections by stimulating the activation and migration of immune cells to the infected sites. Mechanistically, binding of CXCL10 to the CXCR3 receptor activates G protein-mediated signaling and results in downstream activation of phospholipase C-dependent pathway, an increase in intracellular calcium production and actin reorganization. In turn, recruitment of activated Th1 lymphocytes occurs at sites of inflammation. Activation of the CXCL10/CXCR3 axis also plays an important role in neurons in response to brain injury for activating microglia, the resident macrophage population of the central nervous system, and directing them to the lesion site. This recruitment is an essential element for neuronal reorganization. This chain is C-X-C motif chemokine 10 (Cxcl10), found in Rattus norvegicus (Rat).